Here is a 673-residue protein sequence, read N- to C-terminus: DNA topoisomerase 1 (673 aa).

Residues 1-134 form the Toprim domain; it reads MVAEKPKAAA…ARRMKFSTLA (134 aa). Residues glutamate 4 and aspartate 103 each contribute to the Mg(2+) site. The 420-residue stretch at 149 to 568 folds into the Topo IA-type catalytic domain; that stretch reads DVEMIEAGMA…MSKKTISKLL (420 aa). The tract at residues 189–194 is interaction with DNA; the sequence is SAGRVQ. The O-(5'-phospho-DNA)-tyrosine intermediate role is filled by tyrosine 311. The tract at residues 352–374 is disordered; the sequence is LRPVQGSKDDPAHPAIHPTGEKP. The segment at 595 to 615 adopts a C4-type zinc-finger fold; the sequence is CHLCGRKAVSAVSGYRLCSHH.

This sequence belongs to the type IA topoisomerase family. As to quaternary structure, monomer. It depends on Mg(2+) as a cofactor.

It catalyses the reaction ATP-independent breakage of single-stranded DNA, followed by passage and rejoining.. Its function is as follows. Releases the supercoiling and torsional tension of DNA, which is introduced during the DNA replication and transcription, by transiently cleaving and rejoining one strand of the DNA duplex. Introduces a single-strand break via transesterification at a target site in duplex DNA. The scissile phosphodiester is attacked by the catalytic tyrosine of the enzyme, resulting in the formation of a DNA-(5'-phosphotyrosyl)-enzyme intermediate and the expulsion of a 3'-OH DNA strand. The free DNA strand then undergoes passage around the unbroken strand, thus removing DNA supercoils. Finally, in the religation step, the DNA 3'-OH attacks the covalent intermediate to expel the active-site tyrosine and restore the DNA phosphodiester backbone. The polypeptide is DNA topoisomerase 1 (Aeropyrum pernix (strain ATCC 700893 / DSM 11879 / JCM 9820 / NBRC 100138 / K1)).